The following is an 85-amino-acid chain: Toxin BmKaTx10 (85 aa).

An N-terminal signal peptide occupies residues 1-19 (MNYLVMVSFALLLMTGVES). The 63-residue stretch at 21 to 83 (RDGYIALPHN…VPIRVPGRCH (63 aa)) folds into the LCN-type CS-alpha/beta domain. 4 cysteine pairs are disulfide-bonded: cysteine 31-cysteine 82, cysteine 35-cysteine 55, cysteine 41-cysteine 65, and cysteine 45-cysteine 67.

It belongs to the long (4 C-C) scorpion toxin superfamily. Sodium channel inhibitor family. Alpha subfamily. Expressed by the venom gland.

It is found in the secreted. Its function is as follows. Alpha toxins bind voltage-independently at site-3 of sodium channels (Nav) and inhibit the inactivation of the activated channels, thereby blocking neuronal transmission. The sequence is that of Toxin BmKaTx10 from Olivierus martensii (Manchurian scorpion).